A 996-amino-acid chain; its full sequence is NACHT, LRR and PYD domains-containing protein 9 (996 aa).

In terms of domain architecture, Pyrin spans 1–94 (MAESFFSDFG…WRKARNEIRQ (94 aa)). The NACHT domain occupies 150 to 469 (PTVVLHGPEG…FYMFTRPKDP (320 aa)). Position 156–163 (156–163 (GPEGIGKT)) interacts with ATP. 6 LRR repeats span residues 748 to 769 (KLNL…VLCE), 777 to 798 (ALEA…HLSQ), 805 to 825 (SLTF…TTLC), 834 to 855 (NLQE…DIAT), 862 to 883 (KLKT…QLCK), and 891 to 914 (KLEN…ASAL).

Belongs to the NLRP family. Sensor component of NLRP9 inflammasomes. Inflammasomes are supramolecular complexes that assemble in the cytosol in response to pathogens, such as rotavirus, and play critical roles in innate immunity and inflammation. The core of NLRP9 inflammasomes consists of a signal sensor component (NLRP9), an adapter (ASC/PYCARD), which recruits an effector pro-inflammatory caspase (CASP1). Within the complex, NLRP9 and PYCARD interact via their respective DAPIN/pyrin domains. This interaction initiates speck formation (nucleation) which greatly enhances further addition of soluble PYCARD molecules to the speck in a prion-like polymerization process. Clustered PYCARD nucleates the formation of CASP1 filaments through the interaction of their respective CARD domains, acting as a platform for CASP1 polymerization. CASP1 filament formation increases local enzyme concentration, resulting in trans-autocleavage and activation. Active CASP1 then processes IL1B and IL18 precursors, leading to the release of mature cytokines in the extracellular milieu and inflammatory response. Interacts with DHX9 upon rotavirus infection; this interaction may trigger inflammasome activation and inflammatory response. Detected exclusively in testis and ovary, and at high level in the oocyte from antral follicles.

The protein resides in the cytoplasm. The protein localises to the inflammasome. In terms of biological role, as the sensor component of the NLRP9 inflammasome, plays a crucial role in innate immunity and inflammation. In response to pathogens, including rotavirus, initiates the formation of the inflammasome polymeric complex, made of NLRP9, PYCARD and CASP1. Recruitment of proCASP1 to the inflammasome promotes its activation and CASP1-catalyzed IL1B and IL18 maturation and release in the extracellular milieu. The active cytokines stimulate inflammatory responses. Inflammasomes can also induce pyroptosis, an inflammatory form of programmed cell death. NLRP9 inflammasome activation may be initiated by DHX9 interaction with viral double-stranded RNA (dsRNA), preferentially to short dsRNA segments. The sequence is that of NACHT, LRR and PYD domains-containing protein 9 (NLRP9) from Bos taurus (Bovine).